A 2188-amino-acid polypeptide reads, in one-letter code: Phenolphthiocerol/phthiocerol polyketide synthase subunit C (2188 aa).

The region spanning 34–462 is the Ketosynthase family 3 (KS3) domain; sequence SEPIAVIGMG…GTNAHVVIEQ (429 aa). Catalysis depends on for beta-ketoacyl synthase activity residues Cys-210, His-345, and His-384. Residues 572-890 form an acyltransferase region; it reads VFVYSGRGSQ…NLNTTHTTHP (319 aa). The active-site For malonyltransferase activity is the Ser-660. The tract at residues 928–1050 is N-terminal hotdog fold; the sequence is HPLLGVGVTD…ATVARAEPLA (123 aa). The tract at residues 928 to 1093 is dehydratase; the sequence is HPLLGVGVTD…QQHGPAFQGI (166 aa). The region spanning 928–1223 is the PKS/mFAS DH domain; that stretch reads HPLLGVGVTD…MAVLGSGSGA (296 aa). His-959 serves as the catalytic Proton acceptor; for dehydratase activity. The C-terminal hotdog fold stretch occupies residues 1067–1223; sequence EDQLDPDDLY…MAVLGSGSGA (157 aa). Asp-1129 acts as the Proton donor; for dehydratase activity in catalysis. Residues 1467 to 1778 form an enoylreductase region; that stretch reads GRLDALNVHE…SGKHTGKIVI (312 aa). A beta-ketoacyl reductase region spans residues 1802 to 1981; the sequence is GGYLIVGGMG…GINWGPWADV (180 aa). 1803–1848 serves as a coordination point for NADP(+); it reads GYLIVGGMGGLGFVVARWLAEQGAGLIVLNGRSAPSDEVAAAIAEL. In terms of domain architecture, Carrier spans 2069 to 2145; the sequence is ERPGHLASAI…DLATALCERM (77 aa). Ser-2105 is modified (O-(pantetheine 4'-phosphoryl)serine).

In terms of assembly, homodimer. NADP(+) serves as cofactor. The cofactor is pantetheine 4'-phosphate.

It carries out the reaction icosanoyl-[(phenol)carboxyphthiodiolenone synthase] + 2 (S)-methylmalonyl-CoA + 3 malonyl-CoA + 5 NADPH + 10 H(+) = C32-carboxyphthiodiolenone-[(phenol)carboxyphthiodiolenone synthase] + 5 CO2 + 5 NADP(+) + 5 CoA + 2 H2O. The catalysed reaction is docosanoyl-[(phenol)carboxyphthiodiolenone synthase] + 2 (S)-methylmalonyl-CoA + 3 malonyl-CoA + 5 NADPH + 10 H(+) = C34-carboxyphthiodiolenone-[(phenol)carboxyphthiodiolenone synthase] + 5 CO2 + 5 NADP(+) + 5 CoA + 2 H2O. The enzyme catalyses 17-(4-hydroxyphenyl)heptadecanoyl-[(phenol)carboxyphthiodiolenone synthase] + 2 (S)-methylmalonyl-CoA + 3 malonyl-CoA + 5 NADPH + 10 H(+) = C35-(phenol)carboxyphthiodiolenone-[(phenol)carboxyphthiodiolenone synthase] + 5 CO2 + 5 NADP(+) + 5 CoA + 2 H2O. It catalyses the reaction 19-(4-hydroxyphenyl)nonadecanoyl-[(phenol)carboxyphthiodiolenone synthase] + 2 (S)-methylmalonyl-CoA + 3 malonyl-CoA + 5 NADPH + 10 H(+) = C37-(phenol)carboxyphthiodiolenone-[(phenol)carboxyphthiodiolenone synthase] + 5 CO2 + 5 NADP(+) + 5 CoA + 2 H2O. Its pathway is lipid metabolism; fatty acid biosynthesis. Its function is as follows. Part of the PpsABCDE complex involved in the biosynthesis of the lipid core common to phthiocerols and phenolphthiocerols by successive additions of malonyl-CoA or methylmalonyl-CoA extender units. PpsA can accept as substrate the activated forms of either icosanoyl (C20), docosanoyl (C22) or lignoceroyl (C24) groups from FadD26, or a (4-hydroxyphenyl)-C17 or (4-hydroxyphenyl)-C19 fatty acyl from FadD29. PpsA initiates the biosynthesis and extends its substrate using a malonyl-CoA extender unit. The PpsB and PpsC proteins add the second and third malonyl-CoA extender units. PpsD adds an (R)-methylmalonyl unit and PpsE adds a second (R)-methylmalonyl unit. The incorporation of the methylmalonyl units results in formation of two branched methyl groups in the elongated product. This is Phenolphthiocerol/phthiocerol polyketide synthase subunit C (ppsC) from Mycobacterium bovis (strain ATCC BAA-935 / AF2122/97).